We begin with the raw amino-acid sequence, 205 residues long: Urease accessory protein UreE (205 aa).

A disordered region spans residues 171–205 (AHEAHPHAHSHAGGHGHVHSGHGHGGKHGEHDAES). Residues 177–196 (HAHSHAGGHGHVHSGHGHGG) show a composition bias toward basic residues.

The protein belongs to the UreE family.

It localises to the cytoplasm. Functionally, involved in urease metallocenter assembly. Binds nickel. Probably functions as a nickel donor during metallocenter assembly. The chain is Urease accessory protein UreE from Bordetella bronchiseptica (strain ATCC BAA-588 / NCTC 13252 / RB50) (Alcaligenes bronchisepticus).